A 522-amino-acid polypeptide reads, in one-letter code: Semenogelin-2 (522 aa).

The N-terminal stretch at 1 to 23 is a signal peptide; sequence MKSIILFVLSLLLILEKQAAVMG. 4 disordered regions span residues 26–62, 132–158, 272–358, and 379–522; these read CGSK…SKGS, GGQA…ISSQ, NLNQ…ERHL, and EEQI…PVST. 2 stretches are compositionally biased toward polar residues: residues 31-40 and 137-158; these read QLPSGSSQFP and RGTQ…ISSQ. Over residues 292-310 the composition is skewed to basic and acidic residues; the sequence is RTEERQLNRGEKSVQKDVS. Polar residues predominate over residues 325–335; that stretch reads KSQNQVTIHSQ. Positions 336–345 are enriched in basic and acidic residues; that stretch reads GQEHGHKENK. 3 stretches are compositionally biased toward polar residues: residues 379 to 397, 427 to 436, and 446 to 464; these read EEQI…SQAQ, KDVSQSSTSF, and SQIQ…QNAK. Composition is skewed to basic and acidic residues over residues 465–492 and 499–522; these read GKSD…ESSE and TEHE…PVST.

The protein belongs to the semenogelin family. As to quaternary structure, interacts with SERPINA5.

It is found in the secreted. Functionally, participates in the formation of a gel matrix (sperm coagulum) entrapping the accessory gland secretions and ejaculated spermatozoa. In Hylobates klossii (Kloss's gibbon), this protein is Semenogelin-2 (SEMG2).